Consider the following 384-residue polypeptide: MAP kinase-activated protein kinase 3 (384 aa).

Met1 is subject to N-acetylmethionine. Positions 1–33 are disordered; sequence MDGETAGEKGSLVPQPGALGAPALGGAPAPGVR. Over residues 14 to 31 the composition is skewed to low complexity; it reads PQPGALGAPALGGAPAPG. The 261-residue stretch at 46–306 folds into the Protein kinase domain; that stretch reads QLSKQVLGLG…IMQFMNHPWI (261 aa). ATP-binding positions include 52-60 and Lys75; that span reads LGLGVNGKV. The active-site Proton acceptor is Asp168. A Phosphothreonine; by MAPK14 modification is found at Thr203. A Phosphoserine; by MAPK14 modification is found at Ser253. Ser309 bears the Phosphoserine; by autocatalysis mark. The tract at residues 309–345 is autoinhibitory helix; that stretch reads SMEVPQTPLHTARVLEEDKDHWDDVKEEMTSALATMR. A Phosphothreonine; by MAPK14 modification is found at Thr315. Positions 337 to 346 match the Nuclear export signal (NES) motif; it reads MTSALATMRV. The p38 MAPK-binding site stretch occupies residues 347 to 371; the sequence is DYDQVKIKDLKTSNNRLLNKRRKKQ. 2 consecutive short sequence motifs (bipartite nuclear localization signal) follow at residues 352–355 and 366–370; these read KIKD and KRRKK. Residues 359–384 form a disordered region; it reads SNNRLLNKRRKKQGGSSSASPGCNNQ. Over residues 372–384 the composition is skewed to polar residues; the sequence is GGSSSASPGCNNQ.

It belongs to the protein kinase superfamily. CAMK Ser/Thr protein kinase family. Heterodimer with p38-alpha/MAPK14. The heterodimer with p38-alpha/MAPK14 forms a stable complex: molecules are positioned 'face to face' so that the ATP-binding sites of both kinases are at the heterodimer interface. Interacts with TCF3 and with polycomb proteins, such as PCH2 and BMI1/PCGF4. Post-translationally, phosphorylated and activated by MAPK1/ERK2 and MAPK3/ERK1. Phosphorylated and activated by MAP kinase p38-alpha/MAPK14 at Thr-203, Ser-253 and Thr-315.

Its subcellular location is the nucleus. The protein resides in the cytoplasm. It catalyses the reaction L-seryl-[protein] + ATP = O-phospho-L-seryl-[protein] + ADP + H(+). It carries out the reaction L-threonyl-[protein] + ATP = O-phospho-L-threonyl-[protein] + ADP + H(+). With respect to regulation, activated following phosphorylation by p38-alpha/MAPK14 following various stresses. Inhibited by ligand 5B (2'-[2-(1,3-benzodioxol-5-yl)pyrimidin-4-yl]-5',6'-dihydrospiro[piperidine-4,7'-pyrrolo[3,2-c]pyridin]- 4'(1'h)-one) and ligand P4O (2-[2-(2-fluorophenyl)pyridin-4-yl]-1,5,6,7-tetrahydro- 4h-pyrrolo[3,2-c]pyridin-4-one), 2 ATP-competitive inhibitors. In terms of biological role, stress-activated serine/threonine-protein kinase involved in cytokines production, endocytosis, cell migration, chromatin remodeling and transcriptional regulation. Following stress, it is phosphorylated and activated by MAP kinase p38-alpha/MAPK14, leading to phosphorylation of substrates. Phosphorylates serine in the peptide sequence, Hyd-X-R-X(2)-S, where Hyd is a large hydrophobic residue. MAPKAPK2 and MAPKAPK3, share the same function and substrate specificity, but MAPKAPK3 kinase activity and level in protein expression are lower compared to MAPKAPK2. Phosphorylates HSP27/HSPB1, KRT18, KRT20, RCSD1, RPS6KA3, TAB3 and TTP/ZFP36. Mediates phosphorylation of HSP27/HSPB1 in response to stress, leading to dissociate HSP27/HSPB1 from large small heat-shock protein (sHsps) oligomers and impair their chaperone activities and ability to protect against oxidative stress effectively. Involved in inflammatory response by regulating tumor necrosis factor (TNF) and IL6 production post-transcriptionally: acts by phosphorylating AU-rich elements (AREs)-binding proteins, such as TTP/ZFP36, leading to regulate the stability and translation of TNF and IL6 mRNAs. Phosphorylation of TTP/ZFP36, a major post-transcriptional regulator of TNF, promotes its binding to 14-3-3 proteins and reduces its ARE mRNA affinity leading to inhibition of dependent degradation of ARE-containing transcript. Involved in toll-like receptor signaling pathway (TLR) in dendritic cells: required for acute TLR-induced macropinocytosis by phosphorylating and activating RPS6KA3. Also acts as a modulator of Polycomb-mediated repression. The chain is MAP kinase-activated protein kinase 3 (Mapkapk3) from Rattus norvegicus (Rat).